Consider the following 100-residue polypeptide: Small ribosomal subunit protein bS20 (100 aa).

It belongs to the bacterial ribosomal protein bS20 family.

Its function is as follows. Binds directly to 16S ribosomal RNA. The sequence is that of Small ribosomal subunit protein bS20 from Synechococcus sp. (strain JA-3-3Ab) (Cyanobacteria bacterium Yellowstone A-Prime).